The sequence spans 541 residues: Membrane protein insertase YidC (541 aa).

The helical transmembrane segment at 6-26 (SLLVLALIFISFLVYQQWQLD) threads the bilayer. The interval 34-56 (EQTTSITATSDVPASSPSNSQAI) is disordered. 4 helical membrane passes run 337–357 (FWLL…IICV), 416–436 (LGGC…YWTF), 454–474 (LSAQ…MFLL), and 495–515 (PLIF…YWLV).

This sequence belongs to the OXA1/ALB3/YidC family. Type 1 subfamily. In terms of assembly, interacts with the Sec translocase complex via SecD. Specifically interacts with transmembrane segments of nascent integral membrane proteins during membrane integration.

The protein localises to the cell inner membrane. Its function is as follows. Required for the insertion and/or proper folding and/or complex formation of integral membrane proteins into the membrane. Involved in integration of membrane proteins that insert both dependently and independently of the Sec translocase complex, as well as at least some lipoproteins. Aids folding of multispanning membrane proteins. The polypeptide is Membrane protein insertase YidC (Haemophilus influenzae (strain PittEE)).